A 70-amino-acid chain; its full sequence is MAVPKKRTSRSKKKIRKNVRKGKAYRAAIKAFSLAKSISTGHSKSFYCIVNDDSSGSSESKLTAIDLDDP.

Disordered regions lie at residues 1–20 (MAVP…KNVR) and 51–70 (NDDS…LDDP). The span at 52-61 (DDSSGSSESK) shows a compositional bias: polar residues.

The protein belongs to the bacterial ribosomal protein bL32 family.

It is found in the plastid. The protein resides in the chloroplast. The protein is Large ribosomal subunit protein bL32c (rpl32) of Pinus thunbergii (Japanese black pine).